The sequence spans 284 residues: 2-dehydro-3-deoxyphosphooctonate aldolase (284 aa).

The protein belongs to the KdsA family.

The protein resides in the cytoplasm. It carries out the reaction D-arabinose 5-phosphate + phosphoenolpyruvate + H2O = 3-deoxy-alpha-D-manno-2-octulosonate-8-phosphate + phosphate. The protein operates within carbohydrate biosynthesis; 3-deoxy-D-manno-octulosonate biosynthesis; 3-deoxy-D-manno-octulosonate from D-ribulose 5-phosphate: step 2/3. Its pathway is bacterial outer membrane biogenesis; lipopolysaccharide biosynthesis. The polypeptide is 2-dehydro-3-deoxyphosphooctonate aldolase (Vibrio vulnificus (strain CMCP6)).